The sequence spans 593 residues: Translation initiation factor IF-2 (593 aa).

Positions 101–270 constitute a tr-type G domain; that stretch reads LRPPVVTIMG…LLIAELEDLR (170 aa). Positions 110–117 are G1; it reads GHVDHGKT. 110-117 provides a ligand contact to GTP; sequence GHVDHGKT. A G2 region spans residues 135–139; it reads GITQH. A G3 region spans residues 156-159; sequence DTPG. Residues 156–160 and 210–213 each bind GTP; these read DTPGH and NKMD. Residues 210–213 form a G4 region; sequence NKMD. The interval 246–248 is G5; it reads SAR.

The protein belongs to the TRAFAC class translation factor GTPase superfamily. Classic translation factor GTPase family. IF-2 subfamily.

The protein resides in the cytoplasm. One of the essential components for the initiation of protein synthesis. Protects formylmethionyl-tRNA from spontaneous hydrolysis and promotes its binding to the 30S ribosomal subunits. Also involved in the hydrolysis of GTP during the formation of the 70S ribosomal complex. The polypeptide is Translation initiation factor IF-2 (Dehalococcoides mccartyi (strain CBDB1)).